The primary structure comprises 195 residues: PRELI domain containing protein 3B (195 aa).

The PRELI/MSF1 domain occupies 1–172 (MKIWTSEHVF…VIHKLNAEIE (172 aa)). Serine 46 and serine 51 each carry phosphoserine.

Belongs to the slowmo family.

The protein is PRELI domain containing protein 3B (Prelid3b) of Mus musculus (Mouse).